The following is a 727-amino-acid chain: DNA topoisomerase 3 (727 aa).

Residues 3–136 (KTVVLAEKPS…LKRLWISSVT (134 aa)) form the Toprim domain. Glutamate 9 and aspartate 105 together coordinate Mg(2+). The 440-residue stretch at 153 to 592 (FENLYHSAVA…EMKEYAKQTI (440 aa)) folds into the Topo IA-type catalytic domain. The interval 187–192 (SCGRVQ) is interaction with DNA. Tyrosine 310 serves as the catalytic O-(5'-phospho-DNA)-tyrosine intermediate. Over residues 685–711 (RRAKDKNSKASKRDVHSYMKKQNKDEP) the composition is skewed to basic and acidic residues. Positions 685–713 (RRAKDKNSKASKRDVHSYMKKQNKDEPIN) are disordered.

The protein belongs to the type IA topoisomerase family. It depends on Mg(2+) as a cofactor.

The enzyme catalyses ATP-independent breakage of single-stranded DNA, followed by passage and rejoining.. In terms of biological role, releases the supercoiling and torsional tension of DNA, which is introduced during the DNA replication and transcription, by transiently cleaving and rejoining one strand of the DNA duplex. Introduces a single-strand break via transesterification at a target site in duplex DNA. The scissile phosphodiester is attacked by the catalytic tyrosine of the enzyme, resulting in the formation of a DNA-(5'-phosphotyrosyl)-enzyme intermediate and the expulsion of a 3'-OH DNA strand. The free DNA strand then undergoes passage around the unbroken strand, thus removing DNA supercoils. Finally, in the religation step, the DNA 3'-OH attacks the covalent intermediate to expel the active-site tyrosine and restore the DNA phosphodiester backbone. This chain is DNA topoisomerase 3, found in Bacillus licheniformis (strain ATCC 14580 / DSM 13 / JCM 2505 / CCUG 7422 / NBRC 12200 / NCIMB 9375 / NCTC 10341 / NRRL NRS-1264 / Gibson 46).